The sequence spans 435 residues: Nucleoredoxin (435 aa).

S2 bears the N-acetylserine mark. In terms of domain architecture, Thioredoxin spans 167 to 314 (PKPFREVIAG…FPWHPKPVLE (148 aa)).

This sequence belongs to the nucleoredoxin family. Associates with the phosphatase 2A holoenzyme. Interacts with PPP2CA; the interaction is direct. Interacts with DVL1 (via PDZ domain); the interaction is direct and regulated by oxidative stress. Widely expressed with higher expression in testis and skin.

The protein localises to the cytoplasm. The protein resides in the cytosol. It is found in the nucleus. The catalysed reaction is [protein]-dithiol + NAD(+) = [protein]-disulfide + NADH + H(+). The enzyme catalyses [protein]-dithiol + NADP(+) = [protein]-disulfide + NADPH + H(+). Functions as a redox-dependent negative regulator of the Wnt signaling pathway, possibly by preventing ubiquitination of DVL3 by the BCR(KLHL12) complex. May also function as a transcriptional regulator act as a regulator of protein phosphatase 2A (PP2A). The polypeptide is Nucleoredoxin (Nxn) (Mus musculus (Mouse)).